The chain runs to 327 residues: GMP reductase (327 aa).

Cys176 functions as the Thioimidate intermediate in the catalytic mechanism. 205-228 contacts NADP(+); sequence IIADGGIRTHGDIAKSIRFGASMV.

Belongs to the IMPDH/GMPR family. GuaC type 2 subfamily.

It catalyses the reaction IMP + NH4(+) + NADP(+) = GMP + NADPH + 2 H(+). Functionally, catalyzes the irreversible NADPH-dependent deamination of GMP to IMP. It functions in the conversion of nucleobase, nucleoside and nucleotide derivatives of G to A nucleotides, and in maintaining the intracellular balance of A and G nucleotides. The sequence is that of GMP reductase from Streptococcus pyogenes serotype M6 (strain ATCC BAA-946 / MGAS10394).